Here is a 310-residue protein sequence, read N- to C-terminus: Olfactory receptor 4K14 (310 aa).

Over 1 to 25 (MDPQNYSLVSEFVLHGLCTSRHLQN) the chain is Extracellular. An N-linked (GlcNAc...) asparagine glycan is attached at Asn5. The chain crosses the membrane as a helical span at residues 26-49 (FFFIFFFGVYVAIMLGNLLILVTV). The Cytoplasmic segment spans residues 50-58 (ISDPCLHSS). A helical membrane pass occupies residues 59–80 (PMYFLLGNLAFLDMWLASFATP). The Extracellular segment spans residues 81 to 101 (KMIRDFLSDQKLISFGGCMAQ). An intrachain disulfide couples Cys98 to Cys190. A helical membrane pass occupies residues 102–121 (IFFLHFTGGAEMVLLVSMAY). The Cytoplasmic portion of the chain corresponds to 122-140 (DRYVAICKPLHYMTLMSWQ). Residues 141–159 (TCIRLVLASWVVGFVHSIS) traverse the membrane as a helical segment. Residues 160–196 (QVAFTVNLPYCGPNEVDSFFCDLPLVIKLACMDTYVL) lie on the Extracellular side of the membrane. Residues 197–220 (GIIMISDSGLLSLSCFLLLLISYT) form a helical membrane-spanning segment. Residues 221-236 (VILLAIRQRAAGSTSK) lie on the Cytoplasmic side of the membrane. A helical membrane pass occupies residues 237 to 259 (ALSTCSAHIMVVTLFFGPCIFVY). Topologically, residues 260–270 (VRPFSRFSVDK) are extracellular. The chain crosses the membrane as a helical span at residues 271 to 290 (LLSVFYTIFTPLLNPIIYTL). The Cytoplasmic portion of the chain corresponds to 291–310 (RNEEMKAAMKKLQNRRVTFQ).

Belongs to the G-protein coupled receptor 1 family.

It is found in the cell membrane. Odorant receptor. The chain is Olfactory receptor 4K14 (OR4K14) from Homo sapiens (Human).